A 249-amino-acid chain; its full sequence is Exosome complex component Rrp4 (249 aa).

The region spanning Asn-73–Lys-144 is the S1 motif domain. A KH domain is found at Gly-154–Ile-211.

Belongs to the RRP4 family. As to quaternary structure, component of the archaeal exosome complex. Forms a trimer of Rrp4 and/or Csl4 subunits. The trimer associates with a hexameric ring-like arrangement composed of 3 Rrp41-Rrp42 heterodimers.

The protein localises to the cytoplasm. Its function is as follows. Non-catalytic component of the exosome, which is a complex involved in RNA degradation. Increases the RNA binding and the efficiency of RNA degradation. Confers strong poly(A) specificity to the exosome. This Saccharolobus solfataricus (strain ATCC 35092 / DSM 1617 / JCM 11322 / P2) (Sulfolobus solfataricus) protein is Exosome complex component Rrp4.